The primary structure comprises 307 residues: Regulating synaptic membrane exocytosis protein 3 (307 aa).

The disordered stretch occupies residues 86-120; it reads STETGIAVEMRSRVTRQGSRESTDGSTNSNSSEGT. The span at 109-119 shows a compositional bias: polar residues; the sequence is DGSTNSNSSEG. A C2 domain is found at 155–273; the sequence is PMGDVHIAIM…DLSAVVTGWY (119 aa). Phosphoserine is present on residues Ser-294 and Ser-297.

In terms of assembly, binds PPFIA3. Does not bind RAB3. As to expression, expressed exclusively in brain with significant levels in cortex, cerebellum and olfactory bulb. Detected at lower level in hippocampus.

It localises to the synapse. Regulates synaptic membrane exocytosis. In Rattus norvegicus (Rat), this protein is Regulating synaptic membrane exocytosis protein 3 (Rims3).